Consider the following 379-residue polypeptide: Peritrophin-48 (379 aa).

The first 20 residues, 1-20 (MKAKTLTATLALILLAFAQA), serve as a signal peptide directing secretion. 2 Chitin-binding type-2 domains span residues 25–83 (ASYC…NCFF) and 86–143 (ANPC…NTGN). 2 disulfide bridges follow: C60-C73 and C120-C133. N-linked (GlcNAc...) asparagine glycans are attached at residues N150 and N168. Chitin-binding type-2 domains follow at residues 151 to 208 (LSVC…ACSR), 224 to 283 (TSPC…RTLK), and 285 to 356 (CNRC…ACEN). The cysteines at positions 185 and 198 are disulfide-linked. N-linked (GlcNAc...) asparagine glycosylation is found at N247 and N252. C324 and C337 form a disulfide bridge. Residues N341, N356, and N373 are each glycosylated (N-linked (GlcNAc...) asparagine).

Glycosylated. Larval peritrophic membrane.

Its function is as follows. Binds chitin and may bind related oligosaccharide structures. The protein is Peritrophin-48 of Chrysomya bezziana (Old world screw-worm fly).